A 295-amino-acid polypeptide reads, in one-letter code: MSSSRPVFRSRWLPYLLVAPQLIITVIFFIWPAGEALWYSLQSVDPFGFSSQFVGLDNFVTLFHDSYYLDAFWTTIKFSTFVTVSGLLVSLFFAALVEYIVRGSRFYQTLMLLPYAVAPAVAAVLWIFLFNPGRGLITHFLAEFGYDWNHAQNSGQAMFLVVFASVWKQISYNFLFFYAALQSIPRSLIEAAAIDGAGPIRRFFKIALPLIAPVSFFLLVVNLVYAFFDTFPVIDAATSGGPVQATTTLIYKIYREGFTGLDLASSAAQSVVLMFLVIVLTVVQFRYVESKVRYQ.

Over 1-11 the chain is Cytoplasmic; sequence MSSSRPVFRSR. The chain crosses the membrane as a helical span at residues 12 to 32; sequence WLPYLLVAPQLIITVIFFIWP. Topologically, residues 33–80 are periplasmic; that stretch reads AGEALWYSLQSVDPFGFSSQFVGLDNFVTLFHDSYYLDAFWTTIKFST. One can recognise an ABC transmembrane type-1 domain in the interval 76-284; the sequence is IKFSTFVTVS…FLVIVLTVVQ (209 aa). Residues 81 to 101 traverse the membrane as a helical segment; sequence FVTVSGLLVSLFFAALVEYIV. At 102–109 the chain is on the cytoplasmic side; sequence RGSRFYQT. A helical membrane pass occupies residues 110 to 130; that stretch reads LMLLPYAVAPAVAAVLWIFLF. Over 131-156 the chain is Periplasmic; sequence NPGRGLITHFLAEFGYDWNHAQNSGQ. A helical transmembrane segment spans residues 157 to 177; it reads AMFLVVFASVWKQISYNFLFF. Residues 178–207 lie on the Cytoplasmic side of the membrane; it reads YAALQSIPRSLIEAAAIDGAGPIRRFFKIA. Residues 208-228 traverse the membrane as a helical segment; the sequence is LPLIAPVSFFLLVVNLVYAFF. Residues 229-262 lie on the Periplasmic side of the membrane; it reads DTFPVIDAATSGGPVQATTTLIYKIYREGFTGLD. A helical transmembrane segment spans residues 263 to 283; sequence LASSAAQSVVLMFLVIVLTVV. Topologically, residues 284–295 are cytoplasmic; that stretch reads QFRYVESKVRYQ.

Belongs to the binding-protein-dependent transport system permease family. UgpAE subfamily. The complex is composed of two ATP-binding proteins (UgpC), two transmembrane proteins (UgpA and UgpE) and a solute-binding protein (UgpB).

The protein resides in the cell inner membrane. Part of the ABC transporter complex UgpBAEC involved in sn-glycerol-3-phosphate (G3P) import. Probably responsible for the translocation of the substrate across the membrane. The polypeptide is sn-glycerol-3-phosphate transport system permease protein UgpA (ugpA) (Escherichia coli (strain UTI89 / UPEC)).